A 256-amino-acid chain; its full sequence is tRNA pseudouridine synthase A (256 aa).

Aspartate 43 acts as the Nucleophile in catalysis. A substrate-binding site is contributed by tyrosine 94.

The protein belongs to the tRNA pseudouridine synthase TruA family.

It catalyses the reaction uridine(38/39/40) in tRNA = pseudouridine(38/39/40) in tRNA. Formation of pseudouridine at positions 38, 39 and 40 in the anticodon stem and loop of transfer RNAs. This is tRNA pseudouridine synthase A from Pyrobaculum aerophilum (strain ATCC 51768 / DSM 7523 / JCM 9630 / CIP 104966 / NBRC 100827 / IM2).